Here is a 207-residue protein sequence, read N- to C-terminus: Ribosomal RNA small subunit methyltransferase G (207 aa).

S-adenosyl-L-methionine-binding positions include glycine 73, leucine 78, 124 to 125 (VE), and arginine 139.

It belongs to the methyltransferase superfamily. RNA methyltransferase RsmG family.

It localises to the cytoplasm. It carries out the reaction guanosine(527) in 16S rRNA + S-adenosyl-L-methionine = N(7)-methylguanosine(527) in 16S rRNA + S-adenosyl-L-homocysteine. In terms of biological role, specifically methylates the N7 position of guanine in position 527 of 16S rRNA. This Enterobacter sp. (strain 638) protein is Ribosomal RNA small subunit methyltransferase G.